The sequence spans 405 residues: L-rhamnonate dehydratase (405 aa).

Substrate-binding residues include H33 and R59. Positions 226, 252, and 280 each coordinate Mg(2+). The active-site Proton acceptor is H329. E349 is a binding site for substrate.

This sequence belongs to the mandelate racemase/muconate lactonizing enzyme family. RhamD subfamily. In terms of assembly, homooctamer; tetramer of dimers. Mg(2+) serves as cofactor.

The enzyme catalyses L-rhamnonate = 2-dehydro-3-deoxy-L-rhamnonate + H2O. Catalyzes the dehydration of L-rhamnonate to 2-keto-3-deoxy-L-rhamnonate (KDR). The chain is L-rhamnonate dehydratase from Escherichia coli O127:H6 (strain E2348/69 / EPEC).